We begin with the raw amino-acid sequence, 56 residues long: Large ribosomal subunit protein bL33 (56 aa).

This sequence belongs to the bacterial ribosomal protein bL33 family.

In Dichelobacter nodosus (strain VCS1703A), this protein is Large ribosomal subunit protein bL33.